A 458-amino-acid chain; its full sequence is Flavonol 3-O-glucosyltransferase F3GT2 (458 aa).

His20 (proton acceptor) is an active-site residue. His20 provides a ligand contact to an anthocyanidin. The active-site Charge relay is the Asp119. Thr141 contacts UDP-alpha-D-glucose. His150 is a binding site for an anthocyanidin. 7 residues coordinate UDP-alpha-D-glucose: Ala333, Gln335, His350, Trp353, Asn354, Ser355, and Glu358. Gly373 lines the an anthocyanidin pocket. The UDP-alpha-D-glucose site is built by Asp374 and Gln375.

Belongs to the UDP-glycosyltransferase family. As to expression, expressed in ovaries.

It catalyses the reaction a flavonol + UDP-alpha-D-glucose = a flavonol 3-O-beta-D-glucoside + UDP + H(+). It functions in the pathway flavonoid metabolism. In terms of biological role, catalyzes the glucosylation of quercetin. Preferentially uses UDP-glucose as sugar donor, but is also able to use UDP-gal and UDP-xyl. Is probably not required for the accumulation of anthocyanin in red-fleshed kiwifruit varieties. The protein is Flavonol 3-O-glucosyltransferase F3GT2 of Actinidia chinensis var. chinensis (Chinese soft-hair kiwi).